The sequence spans 90 residues: MATKKSGGSSSNGRDSRGRRLGVKKFGSELVIPGNIIIRQRGTRYHPGRNVGMGKDHTIFSKIAGVVCFRKRTGGKVFVDVVPQSCLSSV.

The span at 1–13 (MATKKSGGSSSNG) shows a compositional bias: low complexity. Positions 1-20 (MATKKSGGSSSNGRDSRGRR) are disordered.

The protein belongs to the bacterial ribosomal protein bL27 family.

This chain is Large ribosomal subunit protein bL27, found in Anaplasma marginale (strain Florida).